A 408-amino-acid chain; its full sequence is S-adenosylmethionine synthase (408 aa).

Position 142–147 (142–147 (GEGSGD)) interacts with ATP.

Belongs to the AdoMet synthase 2 family. Mg(2+) serves as cofactor.

The catalysed reaction is L-methionine + ATP + H2O = S-adenosyl-L-methionine + phosphate + diphosphate. It functions in the pathway amino-acid biosynthesis; S-adenosyl-L-methionine biosynthesis; S-adenosyl-L-methionine from L-methionine: step 1/1. Its function is as follows. Catalyzes the formation of S-adenosylmethionine from methionine and ATP. This chain is S-adenosylmethionine synthase, found in Halobacterium salinarum (strain ATCC 29341 / DSM 671 / R1).